The sequence spans 433 residues: Trigger factor (433 aa).

The PPIase FKBP-type domain occupies 161–246 (EDRVVIDFVG…LKKVENIVLP (86 aa)).

The protein belongs to the FKBP-type PPIase family. Tig subfamily.

The protein resides in the cytoplasm. The catalysed reaction is [protein]-peptidylproline (omega=180) = [protein]-peptidylproline (omega=0). Involved in protein export. Acts as a chaperone by maintaining the newly synthesized protein in an open conformation. Functions as a peptidyl-prolyl cis-trans isomerase. The protein is Trigger factor of Actinobacillus pleuropneumoniae serotype 7 (strain AP76).